Here is a 425-residue protein sequence, read N- to C-terminus: 3-phosphoshikimate 1-carboxyvinyltransferase (425 aa).

Residues Lys22, Ser23, and Arg27 each coordinate 3-phosphoshikimate. Lys22 contributes to the phosphoenolpyruvate binding site. Positions 95 and 123 each coordinate phosphoenolpyruvate. 3-phosphoshikimate-binding residues include Ser169, Ser170, Gln171, Ser197, Asp313, Asn336, and Lys340. Residue Gln171 coordinates phosphoenolpyruvate. Residue Asp313 is the Proton acceptor of the active site. Residues Arg344, Arg386, and Lys411 each contribute to the phosphoenolpyruvate site.

This sequence belongs to the EPSP synthase family. As to quaternary structure, monomer.

The protein localises to the cytoplasm. The catalysed reaction is 3-phosphoshikimate + phosphoenolpyruvate = 5-O-(1-carboxyvinyl)-3-phosphoshikimate + phosphate. Its pathway is metabolic intermediate biosynthesis; chorismate biosynthesis; chorismate from D-erythrose 4-phosphate and phosphoenolpyruvate: step 6/7. In terms of biological role, catalyzes the transfer of the enolpyruvyl moiety of phosphoenolpyruvate (PEP) to the 5-hydroxyl of shikimate-3-phosphate (S3P) to produce enolpyruvyl shikimate-3-phosphate and inorganic phosphate. The polypeptide is 3-phosphoshikimate 1-carboxyvinyltransferase (Pseudoalteromonas translucida (strain TAC 125)).